The sequence spans 417 residues: Tryptophan synthase beta chain (417 aa).

An N6-(pyridoxal phosphate)lysine modification is found at lysine 110.

It belongs to the TrpB family. In terms of assembly, tetramer of two alpha and two beta chains. Requires pyridoxal 5'-phosphate as cofactor.

The enzyme catalyses (1S,2R)-1-C-(indol-3-yl)glycerol 3-phosphate + L-serine = D-glyceraldehyde 3-phosphate + L-tryptophan + H2O. Its pathway is amino-acid biosynthesis; L-tryptophan biosynthesis; L-tryptophan from chorismate: step 5/5. In terms of biological role, the beta subunit is responsible for the synthesis of L-tryptophan from indole and L-serine. This chain is Tryptophan synthase beta chain, found in Prochlorococcus marinus (strain NATL1A).